We begin with the raw amino-acid sequence, 164 residues long: Dihydrofolate reductase (164 aa).

Residues 2–162 enclose the DHFR domain; the sequence is NISIIVAMSQ…FYVTFKILKK (161 aa). Substrate is bound at residue 6 to 8; sequence IVA. NADP(+) contacts are provided by residues 7-8 and 15-20; these read VA and IGQKNS. D28 is a substrate binding site. An NADP(+)-binding site is contributed by 44–47; that stretch reads GRKT. R58 lines the substrate pocket. Residues 63 to 66 and 96 to 101 each bind NADP(+); these read LTRQ and IGGSNL. Position 115 (T115) interacts with substrate.

The protein belongs to the dihydrofolate reductase family.

The enzyme catalyses (6S)-5,6,7,8-tetrahydrofolate + NADP(+) = 7,8-dihydrofolate + NADPH + H(+). The protein operates within cofactor biosynthesis; tetrahydrofolate biosynthesis; 5,6,7,8-tetrahydrofolate from 7,8-dihydrofolate: step 1/1. Functionally, key enzyme in folate metabolism. Catalyzes an essential reaction for de novo glycine and purine synthesis, and for DNA precursor synthesis. In Buchnera aphidicola subsp. Baizongia pistaciae (strain Bp), this protein is Dihydrofolate reductase (folA).